Reading from the N-terminus, the 154-residue chain is Putative nickel-responsive regulator (154 aa).

Positions 95, 106, 108, and 114 each coordinate Ni(2+).

It belongs to the transcriptional regulatory CopG/NikR family. The cofactor is Ni(2+).

Its function is as follows. Transcriptional regulator. This is Putative nickel-responsive regulator from Caldanaerobacter subterraneus subsp. tengcongensis (strain DSM 15242 / JCM 11007 / NBRC 100824 / MB4) (Thermoanaerobacter tengcongensis).